The following is a 231-amino-acid chain: MKQYNDLFKIIHREGYIFIASFALVSFLLASFNEKLGCIGFIATAWCIYFFRNPDRFVPISDDLVISPADGIIQEIKEALPPPELGLGDVEMIRVSIFLNIFNVHVNRIPANGKILALHYNPGKFFNASLDKASIYNERQSVLMETDQGQKIVFVQIAGLIARRIVCDLEEGNEVKTGERYGIIRFGSRVDVYLPLKTALLVSKGQTAIGGETIIADFGRKKTAEFKFERK.

Residue Ser-188 is the Schiff-base intermediate with substrate; via pyruvic acid of the active site. Position 188 is a pyruvic acid (Ser); by autocatalysis (Ser-188).

The protein belongs to the phosphatidylserine decarboxylase family. PSD-A subfamily. Heterodimer of a large membrane-associated beta subunit and a small pyruvoyl-containing alpha subunit. It depends on pyruvate as a cofactor. Is synthesized initially as an inactive proenzyme. Formation of the active enzyme involves a self-maturation process in which the active site pyruvoyl group is generated from an internal serine residue via an autocatalytic post-translational modification. Two non-identical subunits are generated from the proenzyme in this reaction, and the pyruvate is formed at the N-terminus of the alpha chain, which is derived from the carboxyl end of the proenzyme. The post-translation cleavage follows an unusual pathway, termed non-hydrolytic serinolysis, in which the side chain hydroxyl group of the serine supplies its oxygen atom to form the C-terminus of the beta chain, while the remainder of the serine residue undergoes an oxidative deamination to produce ammonia and the pyruvoyl prosthetic group on the alpha chain.

It is found in the cell membrane. The enzyme catalyses a 1,2-diacyl-sn-glycero-3-phospho-L-serine + H(+) = a 1,2-diacyl-sn-glycero-3-phosphoethanolamine + CO2. Its pathway is phospholipid metabolism; phosphatidylethanolamine biosynthesis; phosphatidylethanolamine from CDP-diacylglycerol: step 2/2. Its function is as follows. Catalyzes the formation of phosphatidylethanolamine (PtdEtn) from phosphatidylserine (PtdSer). The chain is Phosphatidylserine decarboxylase proenzyme from Rickettsia felis (strain ATCC VR-1525 / URRWXCal2) (Rickettsia azadi).